The sequence spans 342 residues: GTPase Obg (342 aa).

The Obg domain occupies 1–159 (MQFIDRAEIE…RHLRLELKLL (159 aa)). The region spanning 160–328 (AEVGIIGLPN…LLAKVWQQLE (169 aa)) is the OBG-type G domain. GTP contacts are provided by residues 166–173 (GLPNAGKS), 191–195 (FTTLI), 213–216 (DIPG), 280–283 (NKID), and 309–311 (SAV). 2 residues coordinate Mg(2+): S173 and T193.

This sequence belongs to the TRAFAC class OBG-HflX-like GTPase superfamily. OBG GTPase family. In terms of assembly, monomer. Requires Mg(2+) as cofactor.

The protein localises to the cytoplasm. Its function is as follows. An essential GTPase which binds GTP, GDP and possibly (p)ppGpp with moderate affinity, with high nucleotide exchange rates and a fairly low GTP hydrolysis rate. Plays a role in control of the cell cycle, stress response, ribosome biogenesis and in those bacteria that undergo differentiation, in morphogenesis control. This Microcystis aeruginosa (strain NIES-843 / IAM M-2473) protein is GTPase Obg.